The sequence spans 251 residues: tRNA pseudouridine synthase A (251 aa).

The active-site Nucleophile is D52. A substrate-binding site is contributed by Y113.

Belongs to the tRNA pseudouridine synthase TruA family. In terms of assembly, homodimer.

The catalysed reaction is uridine(38/39/40) in tRNA = pseudouridine(38/39/40) in tRNA. Formation of pseudouridine at positions 38, 39 and 40 in the anticodon stem and loop of transfer RNAs. The polypeptide is tRNA pseudouridine synthase A (Brucella anthropi (strain ATCC 49188 / DSM 6882 / CCUG 24695 / JCM 21032 / LMG 3331 / NBRC 15819 / NCTC 12168 / Alc 37) (Ochrobactrum anthropi)).